The sequence spans 113 residues: Protein USP1 (113 aa).

Residues 1–18 form the signal peptide; that stretch reads MKITMLFAALSAASGAFA. Repeat copies occupy residues 32 to 37, 40 to 45, 46 to 49, 50 to 53, 59 to 65, and 69 to 75. Positions 32-45 are 2 X 6 AA repeats; sequence IGAGVGIGIGAGVG. The interval 46-53 is 2 X 4 AA approximate tandem repeats; it reads PYGYPYGA. The segment at 59–75 is 2 X 7 AA approximate repeats; that stretch reads LQLLPLRWLSLQWIPLR.

It is found in the secreted. This chain is Protein USP1 (USP1), found in Puccinia graminis (Black stem rust fungus).